We begin with the raw amino-acid sequence, 496 residues long: MIPVIALVGRPNVGKSTLFNRLTRTRDALVADFPGLTRDRKYGRAELDGEEFIIIDTGGIDGAEEGVETHMASQSLQAIQEADIVLFLVDARAGLMPADQGIAKHLRGVEKKTYLVANKTDGIDIDTALADFYSLGLGEIFPIAASHGRGVSQLIEQALLPIVGKFVEEEKELTEEEENAAYWAALEAEQKEQEEEEEEDDFDPTTLPVKLAIVGRPNVGKSTLTNRMLGEERVVVYDMPGTTRDSIYIPMERDGKEYILIDTAGVRKRGKVKETVEKFSVIKTLQAIEDCNVALLVIDAREGISDQDLSLLGYILNSGRSLVIAVNKWDGMTQEDREQVKDMLDLKLGFVDFARVHFISALHGSGVGNLFESIQEAYTCATRRVGTSMLTRIMKMAEDDHQPPLIRGRRVKMKYAHAGGYNPPVVVIHGNQVSDLPDSYKRYLMNYFRRTLQVMGTPIRIQFKEGENPYADKKNKLTASQIRKRKRLMAHLKKSK.

EngA-type G domains lie at P3–F166 and V209–T382. GTP contacts are provided by residues G9–S16, D56–I60, N118–D121, G215–S222, D262–V266, and N327–D330. Positions R383–E467 constitute a KH-like domain.

This sequence belongs to the TRAFAC class TrmE-Era-EngA-EngB-Septin-like GTPase superfamily. EngA (Der) GTPase family. In terms of assembly, associates with the 50S ribosomal subunit.

In terms of biological role, GTPase that plays an essential role in the late steps of ribosome biogenesis. The chain is GTPase Der from Proteus mirabilis (strain HI4320).